A 397-amino-acid chain; its full sequence is Proteasome-activating nucleotidase (397 aa).

A coiled-coil region spans residues 15-58 (DYVTFLKRRIRQLELQVRTLEADKERLERELSRLRMEMSRLRQP). ATP contacts are provided by residues 182–187 (GCGKTL) and histidine 321. The segment at 395-397 (MYG) is docks into pockets in the proteasome alpha-ring to cause gate opening.

Belongs to the AAA ATPase family. In terms of assembly, homohexamer. The hexameric complex has a two-ring architecture resembling a top hat that caps the 20S proteasome core at one or both ends. Upon ATP-binding, the C-terminus of PAN interacts with the alpha-rings of the proteasome core by binding to the intersubunit pockets.

It is found in the cytoplasm. In terms of biological role, ATPase which is responsible for recognizing, binding, unfolding and translocation of substrate proteins into the archaeal 20S proteasome core particle. Is essential for opening the gate of the 20S proteasome via an interaction with its C-terminus, thereby allowing substrate entry and access to the site of proteolysis. Thus, the C-termini of the proteasomal ATPase function like a 'key in a lock' to induce gate opening and therefore regulate proteolysis. Unfolding activity requires energy from ATP hydrolysis, whereas ATP binding alone promotes ATPase-20S proteasome association which triggers gate opening, and supports translocation of unfolded substrates. The polypeptide is Proteasome-activating nucleotidase (Thermococcus kodakarensis (strain ATCC BAA-918 / JCM 12380 / KOD1) (Pyrococcus kodakaraensis (strain KOD1))).